We begin with the raw amino-acid sequence, 97 residues long: Large ribosomal subunit protein uL23 (97 aa).

Belongs to the universal ribosomal protein uL23 family. As to quaternary structure, part of the 50S ribosomal subunit. Contacts protein L29, and trigger factor when it is bound to the ribosome.

In terms of biological role, one of the early assembly proteins it binds 23S rRNA. One of the proteins that surrounds the polypeptide exit tunnel on the outside of the ribosome. Forms the main docking site for trigger factor binding to the ribosome. This Brachyspira hyodysenteriae (strain ATCC 49526 / WA1) protein is Large ribosomal subunit protein uL23.